The chain runs to 729 residues: E3 ubiquitin-protein ligase SH3RF2 (729 aa).

Residues 12 to 53 (CPVCFEKLDVTAKVLPCQHTFCKPCLQRVFKAHKELRCPECR) form an RING-type zinc finger. Residues 78 to 105 (SGQSSGRGGSFRRPGTMTLQDGRKSRTN) form a disordered region. SH3 domains follow at residues 125–184 (DGVP…VIKQ) and 187–252 (QPPP…PNLT). The segment at 258 to 297 (EKNKGRQSSRTKNLSLVSSSSRGNTSTLRRGPGSRRKVPG) is disordered. The span at 263-285 (RQSSRTKNLSLVSSSSRGNTSTL) shows a compositional bias: polar residues. The segment at 370 to 459 (VVSLPGSQQH…RSPGLYTTWT (90 aa)) is interaction with PAK4. In terms of domain architecture, SH3 3 spans 380 to 441 (LSANMFVALH…PNNYVIPIFR (62 aa)). 2 disordered regions span residues 497 to 526 (STAG…QRPL) and 610 to 677 (KSEP…SQPE). Polar residues predominate over residues 517–526 (RKNGSLQRPL). The interval 641-646 (KTVRFQ) is interaction with PPP1CA. Residue Ser649 is modified to Phosphoserine.

This sequence belongs to the SH3RF family. In terms of assembly, interacts with FASLG and PPP1CA. Interacts with PAK4 and TNFRSF1A. Interacts with DLK1, MAP3K10/MLK2, MAPK8IP1/JIP1, MAPK8IP2/JIP2 and MAPK8IP3/JIP3. Interacts with RAC1 (both active GTP- or inactive GDP-bound forms). Autoubiquitinated. As to expression, heart (at protein level). Up-regulated in colon cancer tissues as compared to normal colon tissues (at protein level). Testis. In the heart, present in the apex, left atrium, right atrium, left ventricle and right ventricle, but not in the aorta.

It localises to the nucleus. The catalysed reaction is S-ubiquitinyl-[E2 ubiquitin-conjugating enzyme]-L-cysteine + [acceptor protein]-L-lysine = [E2 ubiquitin-conjugating enzyme]-L-cysteine + N(6)-ubiquitinyl-[acceptor protein]-L-lysine.. It functions in the pathway protein modification; protein ubiquitination. Has E3 ubiquitin-protein ligase activity. Acts as an anti-apoptotic regulator of the JNK pathway by ubiquitinating and promoting the degradation of SH3RF1, a scaffold protein that is required for pro-apoptotic JNK activation. Facilitates TNF-alpha-mediated recruitment of adapter proteins TRADD and RIPK1 to TNFRSF1A and regulates PAK4 protein stability via inhibition of its ubiquitin-mediated proteasomal degradation. Inhibits PPP1CA phosphatase activity. The chain is E3 ubiquitin-protein ligase SH3RF2 (SH3RF2) from Homo sapiens (Human).